The primary structure comprises 415 residues: Tyrosine--tRNA ligase (415 aa).

The 'HIGH' region motif lies at 54 to 63; it reads PTGSNIHLGH. Positions 248 to 252 match the 'KMSKS' region motif; sequence KMSKT. Residue Lys251 participates in ATP binding. Positions 351-415 constitute an S4 RNA-binding domain; the sequence is AKAFYLMSAV…GKKTFRRLTA (65 aa).

Belongs to the class-I aminoacyl-tRNA synthetase family. TyrS type 2 subfamily. In terms of assembly, homodimer.

Its subcellular location is the cytoplasm. The enzyme catalyses tRNA(Tyr) + L-tyrosine + ATP = L-tyrosyl-tRNA(Tyr) + AMP + diphosphate + H(+). Catalyzes the attachment of tyrosine to tRNA(Tyr) in a two-step reaction: tyrosine is first activated by ATP to form Tyr-AMP and then transferred to the acceptor end of tRNA(Tyr). The chain is Tyrosine--tRNA ligase from Synechococcus sp. (strain CC9902).